The following is a 236-amino-acid chain: Orotidine 5'-phosphate decarboxylase (236 aa).

Substrate-binding positions include Asp16, Lys38, 65 to 74, Thr123, Arg184, Gln193, Gly213, and Arg214; that span reads DLKLHDIGNT. Lys67 serves as the catalytic Proton donor.

The protein belongs to the OMP decarboxylase family. Type 1 subfamily. In terms of assembly, homodimer.

The enzyme catalyses orotidine 5'-phosphate + H(+) = UMP + CO2. It participates in pyrimidine metabolism; UMP biosynthesis via de novo pathway; UMP from orotate: step 2/2. Catalyzes the decarboxylation of orotidine 5'-monophosphate (OMP) to uridine 5'-monophosphate (UMP). The sequence is that of Orotidine 5'-phosphate decarboxylase from Methylobacterium sp. (strain 4-46).